Consider the following 428-residue polypeptide: Glutamate-1-semialdehyde 2,1-aminomutase (428 aa).

An N6-(pyridoxal phosphate)lysine modification is found at lysine 265.

This sequence belongs to the class-III pyridoxal-phosphate-dependent aminotransferase family. HemL subfamily. Homodimer. Requires pyridoxal 5'-phosphate as cofactor.

The protein resides in the cytoplasm. It catalyses the reaction (S)-4-amino-5-oxopentanoate = 5-aminolevulinate. It functions in the pathway porphyrin-containing compound metabolism; protoporphyrin-IX biosynthesis; 5-aminolevulinate from L-glutamyl-tRNA(Glu): step 2/2. This chain is Glutamate-1-semialdehyde 2,1-aminomutase, found in Shewanella frigidimarina (strain NCIMB 400).